A 32-amino-acid polypeptide reads, in one-letter code: Photosystem II reaction center protein T (32 aa).

The chain crosses the membrane as a helical span at residues A3–F23.

Belongs to the PsbT family. PSII is composed of 1 copy each of membrane proteins PsbA, PsbB, PsbC, PsbD, PsbE, PsbF, PsbH, PsbI, PsbJ, PsbK, PsbL, PsbM, PsbT, PsbY, PsbZ, Psb30/Ycf12, at least 3 peripheral proteins of the oxygen-evolving complex and a large number of cofactors. It forms dimeric complexes.

The protein localises to the plastid. The protein resides in the chloroplast thylakoid membrane. Found at the monomer-monomer interface of the photosystem II (PS II) dimer, plays a role in assembly and dimerization of PSII. PSII is a light-driven water plastoquinone oxidoreductase, using light energy to abstract electrons from H(2)O, generating a proton gradient subsequently used for ATP formation. The polypeptide is Photosystem II reaction center protein T (Psilotum nudum (Whisk fern)).